Reading from the N-terminus, the 449-residue chain is Probable glucuronosyltransferase 47 A (449 aa).

The Cytoplasmic portion of the chain corresponds to M1–R31. The chain crosses the membrane as a helical; Signal-anchor for type II membrane protein span at residues T32–Q52. Topologically, residues D53–L449 are lumenal. Residues N172 and N433 are each glycosylated (N-linked (GlcNAc...) asparagine).

It belongs to the glycosyltransferase 47 family. In terms of tissue distribution, mostly expressed in newly formed or expanding tissues.

The protein localises to the golgi apparatus membrane. Functionally, involved in the synthesis of glucuronoxylan hemicellulose in secondary cell walls. The protein is Probable glucuronosyltransferase 47 A of Physcomitrium patens (Spreading-leaved earth moss).